The chain runs to 196 residues: Serine recombinase PinQ (196 aa).

The Resolvase/invertase-type recombinase catalytic domain maps to 3-143 (QIFAYCRIST…SGIVRARGAG (141 aa)). The active-site O-(5'-phospho-DNA)-serine intermediate is the Ser-11.

It belongs to the site-specific recombinase resolvase family.

In Escherichia coli (strain K12), this protein is Serine recombinase PinQ (pinQ).